Reading from the N-terminus, the 357-residue chain is Membrane-bound lytic murein transglycosylase C (357 aa).

The first 15 residues, 1–15 (MKKYLLLALLPFLYA), serve as a signal peptide directing secretion. Residue C16 is the site of N-palmitoyl cysteine attachment. A lipid anchor (S-diacylglycerol cysteine) is attached at C16.

It belongs to the transglycosylase Slt family.

The protein resides in the cell outer membrane. It carries out the reaction Exolytic cleavage of the (1-&gt;4)-beta-glycosidic linkage between N-acetylmuramic acid (MurNAc) and N-acetylglucosamine (GlcNAc) residues in peptidoglycan, from either the reducing or the non-reducing ends of the peptidoglycan chains, with concomitant formation of a 1,6-anhydrobond in the MurNAc residue.. Murein-degrading enzyme. May play a role in recycling of muropeptides during cell elongation and/or cell division. This is Membrane-bound lytic murein transglycosylase C from Haemophilus influenzae (strain 86-028NP).